Reading from the N-terminus, the 713-residue chain is Subtilisin-like protease SBT4.9 (713 aa).

The N-terminal stretch at 1–24 is a signal peptide; that stretch reads MARRADSFCLISCVLVSFVISVSA. Residues 25–113 constitute a propeptide, activation peptide; sequence VTDDSQDKQV…VFPDINYKLQ (89 aa). One can recognise an Inhibitor I9 domain in the interval 34–112; sequence VYVVYMGSLP…SVFPDINYKL (79 aa). The Peptidase S8 domain occupies 117–560; that stretch reads SWDFLGLKEG…AGHVDPIAAI (444 aa). The Charge relay system role is filled by Asp145. N-linked (GlcNAc...) asparagine glycosylation occurs at Asn176. The active-site Charge relay system is His200. Asn215 and Asn223 each carry an N-linked (GlcNAc...) asparagine glycan. Residues 356–415 form the PA domain; that stretch reads NYPLYGGSTDGPLLRGKILVSEDKVSSEIVVANINENYHDYAYVSILPSSALSKDDFDSV. Asn420 carries N-linked (GlcNAc...) asparagine glycosylation. Ser499 acts as the Charge relay system in catalysis. Residues Asn536, Asn583, Asn627, and Asn637 are each glycosylated (N-linked (GlcNAc...) asparagine).

Belongs to the peptidase S8 family. In terms of processing, the C-terminal propeptide is autocleaved.

It is found in the secreted. The protein is Subtilisin-like protease SBT4.9 of Arabidopsis thaliana (Mouse-ear cress).